Consider the following 141-residue polypeptide: Large ribosomal subunit protein uL11 (141 aa).

This sequence belongs to the universal ribosomal protein uL11 family. Part of the ribosomal stalk of the 50S ribosomal subunit. Interacts with L10 and the large rRNA to form the base of the stalk. L10 forms an elongated spine to which L12 dimers bind in a sequential fashion forming a multimeric L10(L12)X complex. One or more lysine residues are methylated.

In terms of biological role, forms part of the ribosomal stalk which helps the ribosome interact with GTP-bound translation factors. The protein is Large ribosomal subunit protein uL11 of Acaryochloris marina (strain MBIC 11017).